The chain runs to 130 residues: Large-conductance mechanosensitive channel (130 aa).

2 consecutive transmembrane segments (helical) span residues 11-31 (FALK…AAFG) and 70-90 (GAFI…FIFV).

Belongs to the MscL family. As to quaternary structure, homopentamer.

It localises to the cell membrane. Functionally, channel that opens in response to stretch forces in the membrane lipid bilayer. May participate in the regulation of osmotic pressure changes within the cell. The sequence is that of Large-conductance mechanosensitive channel from Listeria welshimeri serovar 6b (strain ATCC 35897 / DSM 20650 / CCUG 15529 / CIP 8149 / NCTC 11857 / SLCC 5334 / V8).